Reading from the N-terminus, the 507-residue chain is Ribose import ATP-binding protein RbsA (507 aa).

2 ABC transporter domains span residues 7–242 and 253–497; these read LEMR…VGRP and IPLG…TGVT. 39–46 provides a ligand contact to ATP; it reads GENGAGKS.

Belongs to the ABC transporter superfamily. Ribose importer (TC 3.A.1.2.1) family. In terms of assembly, the complex is composed of an ATP-binding protein (RbsA), two transmembrane proteins (RbsC) and a solute-binding protein (RbsB).

It localises to the cell inner membrane. The enzyme catalyses D-ribose(out) + ATP + H2O = D-ribose(in) + ADP + phosphate + H(+). Its function is as follows. Part of the ABC transporter complex RbsABC involved in ribose import. Responsible for energy coupling to the transport system. The sequence is that of Ribose import ATP-binding protein RbsA from Yersinia pestis bv. Antiqua (strain Antiqua).